An 893-amino-acid polypeptide reads, in one-letter code: DNA mismatch repair protein MutS (893 aa).

637–644 (GPNMGGKS) provides a ligand contact to ATP.

Belongs to the DNA mismatch repair MutS family.

In terms of biological role, this protein is involved in the repair of mismatches in DNA. It is possible that it carries out the mismatch recognition step. This protein has a weak ATPase activity. The chain is DNA mismatch repair protein MutS from Burkholderia thailandensis (strain ATCC 700388 / DSM 13276 / CCUG 48851 / CIP 106301 / E264).